We begin with the raw amino-acid sequence, 228 residues long: Ribose-5-phosphate isomerase A (228 aa).

Substrate-binding positions include 32 to 35 (TGST), 85 to 88 (DGAD), and 98 to 101 (KGGG). Glutamate 107 serves as the catalytic Proton acceptor. Lysine 125 provides a ligand contact to substrate.

It belongs to the ribose 5-phosphate isomerase family. As to quaternary structure, homodimer.

The catalysed reaction is aldehydo-D-ribose 5-phosphate = D-ribulose 5-phosphate. It functions in the pathway carbohydrate degradation; pentose phosphate pathway; D-ribose 5-phosphate from D-ribulose 5-phosphate (non-oxidative stage): step 1/1. Functionally, catalyzes the reversible conversion of ribose-5-phosphate to ribulose 5-phosphate. This chain is Ribose-5-phosphate isomerase A, found in Cupriavidus pinatubonensis (strain JMP 134 / LMG 1197) (Cupriavidus necator (strain JMP 134)).